A 152-amino-acid polypeptide reads, in one-letter code: MEAVLNELVSVEDLKNFERKFQSEQAAGSVSKSTQFEYAWCLVRSKYNEDIRRGIVLLEELLPKGSKEEQRDYVFYLAVGNYRLKEYEKALKYVRGLLQTEPQNNQAKELERLIDKAMKKDGLVGMAIVGGMALGVAGLAGLIGLAVSKSKS.

Methionine 1 bears the N-acetylmethionine mark. Residues methionine 1 to glycine 122 are Cytoplasmic-facing. Residue serine 10 is modified to Phosphoserine. The TPR repeat unit spans residues arginine 71 to asparagine 104. A helical membrane pass occupies residues leucine 123–isoleucine 143. The Mitochondrial intermembrane segment spans residues glycine 144–serine 152.

Belongs to the FIS1 family. As to quaternary structure, interacts with DNM1L/DLP1 through the TPR region; may form part of a larger protein complex at the endoplasmic reticulum-mitochondrial interface during mitochondrial fission. Interacts with MARCHF5. Interacts with MIEF1. Interacts with PEX11A, PEX11B and PEX11G. Post-translationally, ubiquitinated by MARCHF5.

Its subcellular location is the mitochondrion outer membrane. The protein localises to the peroxisome membrane. In terms of biological role, involved in the fragmentation of the mitochondrial network and its perinuclear clustering. Plays a minor role in the recruitment and association of the fission mediator dynamin-related protein 1 (DNM1L) to the mitochondrial surface and mitochondrial fission. May not be essential for the assembly of functional fission complexes and the subsequent membrane scission event. Also mediates peroxisomal fission. May act when the products of fission are directed toward mitochondrial homeostasis, mitophagy, or apoptosis. Can induce cytochrome c release from the mitochondrion to the cytosol, ultimately leading to apoptosis. This is Mitochondrial fission 1 protein (Fis1) from Mus musculus (Mouse).